A 288-amino-acid chain; its full sequence is CBY1-interacting BAR domain-containing protein 2 (288 aa).

The segment at Ser6–Glu217 is BAR-like. Disordered regions lie at residues Gln133–Ser157 and Thr256–Gln288. A compositionally biased stretch (polar residues) spans Asp138 to Ser157. A compositionally biased stretch (acidic residues) spans Ser266 to Val276.

The protein belongs to the CIBAR family. Homodimer (via BAR-like domain). Heterodimer (via BAR-like domain) with FAM92A. Interacts with CBY1.

Its subcellular location is the cytoplasm. It is found in the cytoskeleton. The protein resides in the microtubule organizing center. It localises to the centrosome. The protein localises to the centriole. Its subcellular location is the cilium basal body. Its function is as follows. May play a role in ciliogenesis. In cooperation with CBY1 may facilitate ciliogenesis likely by the recruitment and fusion of endosomal vesicles at distal appendages during early stages of ciliogenesis. This Bos taurus (Bovine) protein is CBY1-interacting BAR domain-containing protein 2 (CIBAR2).